The chain runs to 546 residues: CTP synthase (546 aa).

Positions 1–269 (MADTKYIFVT…DKVTLKKLAL (269 aa)) are amidoligase domain. Position 15 (Ser15) interacts with CTP. Residue Ser15 coordinates UTP. 16 to 21 (SLGKGI) provides a ligand contact to ATP. Tyr56 contributes to the L-glutamine binding site. An ATP-binding site is contributed by Asp73. 2 residues coordinate Mg(2+): Asp73 and Glu143. Residues 150-152 (DIE), 190-195 (KTKPTQ), and Lys226 each bind CTP. UTP is bound by residues 190-195 (KTKPTQ) and Lys226. Residues 295 to 537 (HIGLIGKYVE…VKAAHEHSVK (243 aa)) form the Glutamine amidotransferase type-1 domain. Gly357 contributes to the L-glutamine binding site. Catalysis depends on Cys384, which acts as the Nucleophile; for glutamine hydrolysis. L-glutamine-binding positions include 385 to 388 (LGMQ), Glu408, and Arg465. Catalysis depends on residues His510 and Glu512.

Belongs to the CTP synthase family. Homotetramer.

The catalysed reaction is UTP + L-glutamine + ATP + H2O = CTP + L-glutamate + ADP + phosphate + 2 H(+). The enzyme catalyses L-glutamine + H2O = L-glutamate + NH4(+). It carries out the reaction UTP + NH4(+) + ATP = CTP + ADP + phosphate + 2 H(+). It functions in the pathway pyrimidine metabolism; CTP biosynthesis via de novo pathway; CTP from UDP: step 2/2. Its activity is regulated as follows. Allosterically activated by GTP, when glutamine is the substrate; GTP has no effect on the reaction when ammonia is the substrate. The allosteric effector GTP functions by stabilizing the protein conformation that binds the tetrahedral intermediate(s) formed during glutamine hydrolysis. Inhibited by the product CTP, via allosteric rather than competitive inhibition. In terms of biological role, catalyzes the ATP-dependent amination of UTP to CTP with either L-glutamine or ammonia as the source of nitrogen. Regulates intracellular CTP levels through interactions with the four ribonucleotide triphosphates. The sequence is that of CTP synthase from Christiangramia forsetii (strain DSM 17595 / CGMCC 1.15422 / KT0803) (Gramella forsetii).